The sequence spans 138 residues: Basic phospholipase A2 homolog Ts-K49b (138 aa).

Residues 1-16 (MRTLWIMAVLLVGVEG) form the signal peptide. 6 cysteine pairs are disulfide-bonded: C42-C131, C44-C60, C65-C138, C66-C104, C73-C97, and C91-C102. The tract at residues 121-133 (KKKKINLKLFCKK) is important for membrane-damaging activities in eukaryotes and bacteria; heparin-binding.

As to expression, expressed by the venom gland.

The protein resides in the secreted. Snake venom phospholipase A2 homolog that lacks catalytic activity. It shows myotoxic and weak anticoagulant activities. A model of myotoxic mechanism has been proposed: an apo Lys49-PLA2 is activated by the entrance of a hydrophobic molecule (e.g. fatty acid) at the hydrophobic channel of the protein leading to a reorientation of a monomer. This reorientation causes a transition between 'inactive' to 'active' states, causing alignment of C-terminal and membrane-docking sites (MDoS) side-by-side and putting the membrane-disruption sites (MDiS) in the same plane, exposed to solvent and in a symmetric position for both monomers. The MDoS region stabilizes the toxin on membrane by the interaction of charged residues with phospholipid head groups. Subsequently, the MDiS region destabilizes the membrane with penetration of hydrophobic residues. This insertion causes a disorganization of the membrane, allowing an uncontrolled influx of ions (i.e. calcium and sodium), and eventually triggering irreversible intracellular alterations and cell death. This chain is Basic phospholipase A2 homolog Ts-K49b, found in Trimeresurus stejnegeri (Chinese green tree viper).